The chain runs to 453 residues: Signal transduction histidine-protein kinase ArlS (453 aa).

Transmembrane regions (helical) follow at residues 14 to 34 (ITTL…IFFL) and 157 to 177 (FVAI…SYIF). The 54-residue stretch at 179-232 (TQLTKPLVTMSNKMIQIRRDGFQNKLELKTNYEETDNLIDTFNDMMYQIEESFN) folds into the HAMP domain. In terms of domain architecture, Histidine kinase spans 240 to 453 (DASHELRTPL…QYTTFKIIFK (214 aa)). At His243 the chain carries Phosphohistidine; by autocatalysis.

Autophosphorylated.

The protein localises to the cell membrane. The catalysed reaction is ATP + protein L-histidine = ADP + protein N-phospho-L-histidine.. Functionally, member of the two-component regulatory system ArlS/ArlR. ArlS probably functions as a sensor protein kinase which is autophosphorylated at a histidine residue and transfers its phosphate group to ArlR. This chain is Signal transduction histidine-protein kinase ArlS (arlS), found in Staphylococcus haemolyticus (strain JCSC1435).